The primary structure comprises 638 residues: Threonine--tRNA ligase 2 (638 aa).

Positions 1–64 constitute a TGS domain; that stretch reads MSKHVHIQLP…EEDAELSIVT (64 aa). Residues 245–535 form a catalytic region; the sequence is DHRKLGKQLG…LIEHYGGAFP (291 aa). The Zn(2+) site is built by C336, H387, and H512.

Belongs to the class-II aminoacyl-tRNA synthetase family. In terms of assembly, homodimer. It depends on Zn(2+) as a cofactor.

The protein localises to the cytoplasm. The catalysed reaction is tRNA(Thr) + L-threonine + ATP = L-threonyl-tRNA(Thr) + AMP + diphosphate + H(+). In terms of biological role, catalyzes the attachment of threonine to tRNA(Thr) in a two-step reaction: L-threonine is first activated by ATP to form Thr-AMP and then transferred to the acceptor end of tRNA(Thr). Also edits incorrectly charged L-seryl-tRNA(Thr). The chain is Threonine--tRNA ligase 2 (thrZ) from Bacillus subtilis (strain 168).